The sequence spans 429 residues: Ribosomal RNA small subunit methyltransferase B (429 aa).

S-adenosyl-L-methionine-binding positions include Cys254–Lys260, Asp277, Asp303, and Asp322. The active-site Nucleophile is the Cys375.

The protein belongs to the class I-like SAM-binding methyltransferase superfamily. RsmB/NOP family.

Its subcellular location is the cytoplasm. It carries out the reaction cytidine(967) in 16S rRNA + S-adenosyl-L-methionine = 5-methylcytidine(967) in 16S rRNA + S-adenosyl-L-homocysteine + H(+). Its function is as follows. Specifically methylates the cytosine at position 967 (m5C967) of 16S rRNA. The chain is Ribosomal RNA small subunit methyltransferase B from Shigella sonnei (strain Ss046).